Here is a 395-residue protein sequence, read N- to C-terminus: Phosphoglycerate kinase (395 aa).

Substrate-binding positions include 21 to 23 (DFN), R36, 59 to 62 (HLGR), R120, and R153. Residues K203, E325, and 351 to 354 (GGDS) contribute to the ATP site.

The protein belongs to the phosphoglycerate kinase family. Monomer.

It is found in the cytoplasm. It catalyses the reaction (2R)-3-phosphoglycerate + ATP = (2R)-3-phospho-glyceroyl phosphate + ADP. It participates in carbohydrate degradation; glycolysis; pyruvate from D-glyceraldehyde 3-phosphate: step 2/5. In Roseiflexus sp. (strain RS-1), this protein is Phosphoglycerate kinase.